The primary structure comprises 487 residues: Malonate-semialdehyde dehydrogenase (487 aa).

NAD(+) is bound by residues A150, F152, K176, E179, R180, S229, and T251. Catalysis depends on C284, which acts as the Nucleophile. E382 provides a ligand contact to NAD(+).

The protein belongs to the aldehyde dehydrogenase family. IolA subfamily. Homotetramer.

The catalysed reaction is 3-oxopropanoate + NAD(+) + CoA + H2O = hydrogencarbonate + acetyl-CoA + NADH + H(+). It carries out the reaction 2-methyl-3-oxopropanoate + NAD(+) + CoA + H2O = propanoyl-CoA + hydrogencarbonate + NADH + H(+). It functions in the pathway polyol metabolism; myo-inositol degradation into acetyl-CoA; acetyl-CoA from myo-inositol: step 7/7. Its function is as follows. Catalyzes the oxidation of malonate semialdehyde (MSA) and methylmalonate semialdehyde (MMSA) into acetyl-CoA and propanoyl-CoA, respectively. Is involved in a myo-inositol catabolic pathway. Bicarbonate, and not CO2, is the end-product of the enzymatic reaction. The protein is Malonate-semialdehyde dehydrogenase of Bacillus velezensis (strain DSM 23117 / BGSC 10A6 / LMG 26770 / FZB42) (Bacillus amyloliquefaciens subsp. plantarum).